Consider the following 64-residue polypeptide: Large ribosomal subunit protein bL35 (64 aa).

Residues 1 to 26 (MPKMKTKSAAAKRFKTTKSGKIKRKQ) are compositionally biased toward basic residues. The segment at 1 to 46 (MPKMKTKSAAAKRFKTTKSGKIKRKQAYTSHLAPNKTTKQKRHLRK) is disordered.

This sequence belongs to the bacterial ribosomal protein bL35 family.

The sequence is that of Large ribosomal subunit protein bL35 from Mycoplasmoides gallisepticum (strain R(low / passage 15 / clone 2)) (Mycoplasma gallisepticum).